The following is a 348-amino-acid chain: S-adenosylmethionine:tRNA ribosyltransferase-isomerase (348 aa).

It belongs to the QueA family. Monomer.

Its subcellular location is the cytoplasm. The enzyme catalyses 7-aminomethyl-7-carbaguanosine(34) in tRNA + S-adenosyl-L-methionine = epoxyqueuosine(34) in tRNA + adenine + L-methionine + 2 H(+). It functions in the pathway tRNA modification; tRNA-queuosine biosynthesis. In terms of biological role, transfers and isomerizes the ribose moiety from AdoMet to the 7-aminomethyl group of 7-deazaguanine (preQ1-tRNA) to give epoxyqueuosine (oQ-tRNA). In Tolumonas auensis (strain DSM 9187 / NBRC 110442 / TA 4), this protein is S-adenosylmethionine:tRNA ribosyltransferase-isomerase.